Consider the following 365-residue polypeptide: Histidinol-phosphate aminotransferase (365 aa).

The tract at residues 1-22 (MSRPVPNPGILDIAPYTPGKSP) is disordered. Residue Lys-221 is modified to N6-(pyridoxal phosphate)lysine.

The protein belongs to the class-II pyridoxal-phosphate-dependent aminotransferase family. Histidinol-phosphate aminotransferase subfamily. As to quaternary structure, homodimer. Pyridoxal 5'-phosphate serves as cofactor.

It carries out the reaction L-histidinol phosphate + 2-oxoglutarate = 3-(imidazol-4-yl)-2-oxopropyl phosphate + L-glutamate. It functions in the pathway amino-acid biosynthesis; L-histidine biosynthesis; L-histidine from 5-phospho-alpha-D-ribose 1-diphosphate: step 7/9. The protein is Histidinol-phosphate aminotransferase of Nitrobacter winogradskyi (strain ATCC 25391 / DSM 10237 / CIP 104748 / NCIMB 11846 / Nb-255).